A 434-amino-acid polypeptide reads, in one-letter code: MRVLVLGSGVIGTASAYYLARQGFEVTVVDRQPAVAMETSFANAGQISPGYASPWAAPGVPLKAIKWLLERHAPLAIKLTGDVDQYLWMAQMLRNCTASRYAVNKERMVRLSEYSRDCLDELRAETGINYENRSLGTTQLFRTQAQVDAAAKDIAVLEQSGVPYELLDRDGIARVEPALAGVKDILAGALRLPNDQTGDCQLFTTKLADMALKLGVEFRFGQDIQRLDFAGDRINGVWIDGKLETADRYVLALGSYSPQMLKPLGIKAPVYPLKGYSLTVPITNGDMAPTSTILDETYKVAITRFDNRIRVGGMAEIAGFDLSLNPRRRETLEMIVNDLYPRGGDLSQASFWTGLRPATPDGTPIVGATAFRNLFLNTGHGTLGWTMACGSGRLLADLIARKKPQISAEGLDISRYGNSREVAKHGQTAPAHQQ.

FAD is bound at residue 3-17 (VLVLGSGVIGTASAY).

This sequence belongs to the DadA oxidoreductase family. The cofactor is FAD.

The enzyme catalyses a D-alpha-amino acid + A + H2O = a 2-oxocarboxylate + AH2 + NH4(+). It participates in amino-acid degradation; D-alanine degradation; NH(3) and pyruvate from D-alanine: step 1/1. In terms of biological role, oxidative deamination of D-amino acids. In Pseudomonas putida (strain GB-1), this protein is D-amino acid dehydrogenase.